Consider the following 336-residue polypeptide: Protein phosphatase 1 regulatory subunit pprA (336 aa).

The segment covering 1–10 has biased composition (low complexity); that stretch reads MSEQNTIINS. Residues 1–24 are disordered; that stretch reads MSEQNTIINSEEIKENEKIESETE. Residues 11-21 show a composition bias toward basic and acidic residues; sequence EEIKENEKIES. 12 LRR repeats span residues 26-47, 49-70, 71-92, 93-114, 115-136, 139-160, 161-182, 183-204, 205-225, 229-250, 251-272, and 273-294; these read PITY…YNIP, TLLD…NHLK, NLKK…DQLK, ELES…KDFQ, SLTY…SIKD, KIKE…QELV, PIKN…ENLV, NIET…NHLS, HLRI…KGLV, CLEE…QSLK, QLRT…NELP, and DLDE…EQQV. An LRRCT domain is found at 306-336; sequence NPVATHVQYRRMFINMFPQLKQLDATMVKRN.

The protein belongs to the SDS22 family.

The protein resides in the nucleus. Functionally, regulatory subunit of protein phosphatase 1. The protein is Protein phosphatase 1 regulatory subunit pprA (pprA) of Dictyostelium discoideum (Social amoeba).